Here is a 337-residue protein sequence, read N- to C-terminus: Visual pigment-like receptor peropsin (337 aa).

At 1 to 26 (MLRNNLGNSSDSKNEDGSVFSQTEHN) the chain is on the extracellular side. The N-linked (GlcNAc...) asparagine glycan is linked to Asn-8. Residues 27 to 49 (IVATYLIMAGMISIISNIIVLGI) form a helical membrane-spanning segment. At 50 to 61 (FIKYKELRTPTN) the chain is on the cytoplasmic side. The chain crosses the membrane as a helical span at residues 62–87 (AIIINLAVTDIGVSSIGYPMSAASDL). At 88 to 101 (YGSWKFGYAGCQVY) the chain is on the extracellular side. A disulfide bond links Cys-98 and Cys-175. The helical transmembrane segment at 102-121 (AGLNIFFGMASIGLLTVVAV) threads the bilayer. Over 122 to 140 (DRYLTICLPDVGRRMTTNT) the chain is Cytoplasmic. A helical transmembrane segment spans residues 141–164 (YIGLILGAWINGLFWALMPIIGWA). The Extracellular segment spans residues 165–188 (SYAPDPTGATCTINWRKNDRSFVS). A helical membrane pass occupies residues 189–212 (YTMTVIAINFIVPLTVMFYCYYHV). Over 213 to 240 (TLSIKHHTTSDCTESLNRDWSDQIDVTK) the chain is Cytoplasmic. A helical transmembrane segment spans residues 241-264 (MSVIMICMFLVAWSPYSIVCLWAS). Residues 265 to 272 (FGDPKKIP) lie on the Extracellular side of the membrane. Residues 273-297 (PPMAIIAPLFAKSSTFYNPCIYVVA) form a helical membrane-spanning segment. Lys-284 carries the post-translational modification N6-(retinylidene)lysine. Residues 298 to 337 (NKKFRRAMLAMFKCQTHQTMPVTSILPMDVSQNPLASGRI) are Cytoplasmic-facing.

The protein belongs to the G-protein coupled receptor 1 family. Opsin subfamily. As to expression, found only in the eye, where it is localized to the retinal pigment epithelium (RPE). In the RPE, it is localized to the microvilli that surround the photoreceptor outer segments.

It is found in the membrane. Its function is as follows. May play a role in rpe physiology either by detecting light directly or by monitoring the concentration of retinoids or other photoreceptor-derived compounds. The protein is Visual pigment-like receptor peropsin (RRH) of Homo sapiens (Human).